A 959-amino-acid chain; its full sequence is Translation initiation factor IF-2 (959 aa).

Residues 1-10 (MSDKTNDDKT) show a composition bias toward basic and acidic residues. The disordered stretch occupies residues 1 to 374 (MSDKTNDDKT…SQMQETREKI (374 aa)). The segment covering 27 to 37 (EQSTVRQNFSH) has biased composition (polar residues). 2 stretches are compositionally biased toward low complexity: residues 63 to 118 (AAAA…VTKP) and 128 to 138 (QRPGGQQAQRP). 2 stretches are compositionally biased toward basic and acidic residues: residues 154–225 (SEMD…EAAK) and 232–241 (ARSERRDDAR). A compositionally biased stretch (low complexity) spans 246 to 284 (GARPQQAGRPQGGRPQPAGRPQQGSPRPAPIIADAAPIA). Positions 318-333 (PEVRAPKVVKGEDDRR) are enriched in basic and acidic residues. The tr-type G domain maps to 457 to 626 (SRPPVVTIMG…LLQAEMLDLK (170 aa)). Residues 466–473 (GHVDHGKT) are G1. Position 466–473 (466–473 (GHVDHGKT)) interacts with GTP. The interval 491-495 (GITQH) is G2. Residues 512–515 (DTPG) form a G3 region. GTP is bound by residues 512–516 (DTPGH) and 566–569 (NKID). The G4 stretch occupies residues 566–569 (NKID). The tract at residues 602-604 (SAK) is G5.

The protein belongs to the TRAFAC class translation factor GTPase superfamily. Classic translation factor GTPase family. IF-2 subfamily.

It localises to the cytoplasm. One of the essential components for the initiation of protein synthesis. Protects formylmethionyl-tRNA from spontaneous hydrolysis and promotes its binding to the 30S ribosomal subunits. Also involved in the hydrolysis of GTP during the formation of the 70S ribosomal complex. The protein is Translation initiation factor IF-2 of Brucella melitensis biotype 1 (strain ATCC 23456 / CCUG 17765 / NCTC 10094 / 16M).